The following is a 99-amino-acid chain: Large ribosomal subunit protein uL23 (99 aa).

It belongs to the universal ribosomal protein uL23 family. As to quaternary structure, part of the 50S ribosomal subunit. Contacts protein L29, and trigger factor when it is bound to the ribosome.

In terms of biological role, one of the early assembly proteins it binds 23S rRNA. One of the proteins that surrounds the polypeptide exit tunnel on the outside of the ribosome. Forms the main docking site for trigger factor binding to the ribosome. This is Large ribosomal subunit protein uL23 from Pseudomonas aeruginosa (strain LESB58).